A 293-amino-acid chain; its full sequence is Pyridoxal 5'-phosphate synthase subunit PdxS (293 aa).

D-ribose 5-phosphate is bound at residue aspartate 23. Catalysis depends on lysine 80, which acts as the Schiff-base intermediate with D-ribose 5-phosphate. Glycine 152 is a binding site for D-ribose 5-phosphate. Position 164 (arginine 164) interacts with D-glyceraldehyde 3-phosphate. Residues glycine 213 and glycine 234–serine 235 each bind D-ribose 5-phosphate.

Belongs to the PdxS/SNZ family. In terms of assembly, in the presence of PdxT, forms a dodecamer of heterodimers.

It carries out the reaction aldehydo-D-ribose 5-phosphate + D-glyceraldehyde 3-phosphate + L-glutamine = pyridoxal 5'-phosphate + L-glutamate + phosphate + 3 H2O + H(+). It functions in the pathway cofactor biosynthesis; pyridoxal 5'-phosphate biosynthesis. Its function is as follows. Catalyzes the formation of pyridoxal 5'-phosphate from ribose 5-phosphate (RBP), glyceraldehyde 3-phosphate (G3P) and ammonia. The ammonia is provided by the PdxT subunit. Can also use ribulose 5-phosphate and dihydroxyacetone phosphate as substrates, resulting from enzyme-catalyzed isomerization of RBP and G3P, respectively. This Herpetosiphon aurantiacus (strain ATCC 23779 / DSM 785 / 114-95) protein is Pyridoxal 5'-phosphate synthase subunit PdxS.